A 110-amino-acid chain; its full sequence is Hydrogenase maturation factor HypA (110 aa).

Residue H2 coordinates Ni(2+). Zn(2+) contacts are provided by C70, C73, C86, and C89.

It belongs to the HypA/HybF family.

In terms of biological role, involved in the maturation of [NiFe] hydrogenases. Required for nickel insertion into the metal center of the hydrogenase. In Geotalea uraniireducens (strain Rf4) (Geobacter uraniireducens), this protein is Hydrogenase maturation factor HypA.